The sequence spans 315 residues: Isoaspartyl peptidase/L-asparaginase 1 (315 aa).

Phosphoserine is present on Ser-169. Thr-183 acts as the Nucleophile in catalysis. Substrate-binding positions include 211–214 and 233–236; these read RIGD and TGKG.

It belongs to the Ntn-hydrolase family. As to quaternary structure, heterotetramer of two alpha and two beta chains arranged as a dimer of alpha/beta heterodimers. In terms of processing, cleaved into an alpha and beta chain by autocatalysis; this activates the enzyme. The N-terminal residue of the beta subunit is responsible for the nucleophile hydrolase activity.

It carries out the reaction Cleavage of a beta-linked Asp residue from the N-terminus of a polypeptide.. In terms of biological role, acts in asparagine catabolism but also in the final steps of protein and degradation via hydrolysis of a range of isoaspartyl dipeptides. The affinity for Asn and at least 4 isoaspartyl dipeptides (L-beta-Asp-Ala, L-beta-Asp-Gly, L-beta-Asp-Leu, L-beta-Asp-Phe) is quite low, KM being greater than 4.0 mM. The enzyme is inactive on alpha-aspartyl dipeptides. This is Isoaspartyl peptidase/L-asparaginase 1 from Arabidopsis thaliana (Mouse-ear cress).